The primary structure comprises 191 residues: Surfactant protein C (191 aa).

A propeptide spanning residues M1–R23 is cleaved from the precursor. Residues C28 and C29 are each lipidated (S-palmitoyl cysteine). A propeptide spanning residues H59–I191 is cleaved from the precursor. The region spanning F94–I191 is the BRICHOS domain. C121 and C183 are disulfide-bonded.

It is found in the secreted. It localises to the extracellular space. The protein localises to the surface film. In terms of biological role, pulmonary surfactant associated proteins promote alveolar stability by lowering the surface tension at the air-liquid interface in the peripheral air spaces. The polypeptide is Surfactant protein C (SFTPC) (Macaca mulatta (Rhesus macaque)).